Consider the following 342-residue polypeptide: Phosphoribosylformylglycinamidine cyclo-ligase (342 aa).

This sequence belongs to the AIR synthase family.

It localises to the cytoplasm. The enzyme catalyses 2-formamido-N(1)-(5-O-phospho-beta-D-ribosyl)acetamidine + ATP = 5-amino-1-(5-phospho-beta-D-ribosyl)imidazole + ADP + phosphate + H(+). It functions in the pathway purine metabolism; IMP biosynthesis via de novo pathway; 5-amino-1-(5-phospho-D-ribosyl)imidazole from N(2)-formyl-N(1)-(5-phospho-D-ribosyl)glycinamide: step 2/2. The sequence is that of Phosphoribosylformylglycinamidine cyclo-ligase from Staphylococcus saprophyticus subsp. saprophyticus (strain ATCC 15305 / DSM 20229 / NCIMB 8711 / NCTC 7292 / S-41).